A 91-amino-acid polypeptide reads, in one-letter code: DNA-binding protein HU (91 aa).

The protein belongs to the bacterial histone-like protein family. As to quaternary structure, homodimer.

Its function is as follows. Histone-like DNA-binding protein which is capable of wrapping DNA to stabilize it, and thus to prevent its denaturation under extreme environmental conditions. The protein is DNA-binding protein HU (hup) of Lactococcus lactis subsp. lactis (strain IL1403) (Streptococcus lactis).